Here is a 384-residue protein sequence, read N- to C-terminus: Chaperone protein DnaJ (384 aa).

In terms of domain architecture, J spans 5-70 (DYYEVLGVAR…QKKAAYDRFG (66 aa)). The CR-type zinc-finger motif lies at 138 to 216 (GAQKTINVPG…CRGAGRVQKE (79 aa)). The Zn(2+) site is built by Cys-151, Cys-154, Cys-168, Cys-171, Cys-190, Cys-193, Cys-204, and Cys-207. CXXCXGXG motif repeat units follow at residues 151–158 (CAACNGTG), 168–175 (CPTCSGMG), 190–197 (CPTCSGHG), and 204–211 (CQECRGAG). The interval 300–322 (KVPPGTQSGKQLRLRGKGMPPLR) is disordered.

It belongs to the DnaJ family. As to quaternary structure, homodimer. It depends on Zn(2+) as a cofactor.

It is found in the cytoplasm. Its function is as follows. Participates actively in the response to hyperosmotic and heat shock by preventing the aggregation of stress-denatured proteins and by disaggregating proteins, also in an autonomous, DnaK-independent fashion. Unfolded proteins bind initially to DnaJ; upon interaction with the DnaJ-bound protein, DnaK hydrolyzes its bound ATP, resulting in the formation of a stable complex. GrpE releases ADP from DnaK; ATP binding to DnaK triggers the release of the substrate protein, thus completing the reaction cycle. Several rounds of ATP-dependent interactions between DnaJ, DnaK and GrpE are required for fully efficient folding. Also involved, together with DnaK and GrpE, in the DNA replication of plasmids through activation of initiation proteins. The polypeptide is Chaperone protein DnaJ (Paracoccus denitrificans (strain Pd 1222)).